The chain runs to 359 residues: Probable dual-specificity RNA methyltransferase RlmN (359 aa).

Glu-91 functions as the Proton acceptor in the catalytic mechanism. The Radical SAM core domain occupies Gln-97–Arg-329. Cys-104 and Cys-340 are joined by a disulfide. Residues Cys-111, Cys-115, and Cys-118 each contribute to the [4Fe-4S] cluster site. S-adenosyl-L-methionine is bound by residues Gly-163 to Glu-164, Ser-195, Ser-218 to His-220, and Asn-296. Cys-340 (S-methylcysteine intermediate) is an active-site residue.

Belongs to the radical SAM superfamily. RlmN family. The cofactor is [4Fe-4S] cluster.

Its subcellular location is the cytoplasm. The enzyme catalyses adenosine(2503) in 23S rRNA + 2 reduced [2Fe-2S]-[ferredoxin] + 2 S-adenosyl-L-methionine = 2-methyladenosine(2503) in 23S rRNA + 5'-deoxyadenosine + L-methionine + 2 oxidized [2Fe-2S]-[ferredoxin] + S-adenosyl-L-homocysteine. It catalyses the reaction adenosine(37) in tRNA + 2 reduced [2Fe-2S]-[ferredoxin] + 2 S-adenosyl-L-methionine = 2-methyladenosine(37) in tRNA + 5'-deoxyadenosine + L-methionine + 2 oxidized [2Fe-2S]-[ferredoxin] + S-adenosyl-L-homocysteine. Its function is as follows. Specifically methylates position 2 of adenine 2503 in 23S rRNA and position 2 of adenine 37 in tRNAs. In Streptococcus pyogenes serotype M18 (strain MGAS8232), this protein is Probable dual-specificity RNA methyltransferase RlmN.